A 118-amino-acid polypeptide reads, in one-letter code: UPF0102 protein Lxx14785 (118 aa).

Belongs to the UPF0102 family.

The protein is UPF0102 protein Lxx14785 of Leifsonia xyli subsp. xyli (strain CTCB07).